The chain runs to 145 residues: Basic phospholipase A2 cPt09 (145 aa).

The signal sequence occupies residues 1 to 21 (MYPAHLLVLLAVCVSLLGAST). Residues 22-27 (IPPLPL) constitute a propeptide that is removed on maturation. 7 disulfide bridges follow: cysteine 38/cysteine 98, cysteine 54/cysteine 144, cysteine 56/cysteine 72, cysteine 71/cysteine 125, cysteine 78/cysteine 118, cysteine 87/cysteine 111, and cysteine 105/cysteine 116. Ca(2+)-binding residues include tyrosine 55, glycine 57, and glycine 59. Histidine 75 is a catalytic residue. Ca(2+) is bound at residue aspartate 76. The active site involves aspartate 119.

This sequence belongs to the phospholipase A2 family. Group I subfamily. D49 sub-subfamily. Ca(2+) serves as cofactor. In terms of tissue distribution, expressed by the venom gland.

The protein localises to the secreted. It carries out the reaction a 1,2-diacyl-sn-glycero-3-phosphocholine + H2O = a 1-acyl-sn-glycero-3-phosphocholine + a fatty acid + H(+). Its function is as follows. PLA2 catalyzes the calcium-dependent hydrolysis of the 2-acyl groups in 3-sn-phosphoglycerides. In Laticauda semifasciata (Black-banded sea krait), this protein is Basic phospholipase A2 cPt09.